A 207-amino-acid polypeptide reads, in one-letter code: Large ribosomal subunit protein uL3 (207 aa).

It belongs to the universal ribosomal protein uL3 family. Part of the 50S ribosomal subunit. Forms a cluster with proteins L14 and L19.

Its function is as follows. One of the primary rRNA binding proteins, it binds directly near the 3'-end of the 23S rRNA, where it nucleates assembly of the 50S subunit. The sequence is that of Large ribosomal subunit protein uL3 from Fervidobacterium nodosum (strain ATCC 35602 / DSM 5306 / Rt17-B1).